Reading from the N-terminus, the 132-residue chain is uncharacterized protein (132 aa).

This is an uncharacterized protein from Botryotinia fuckeliana (Noble rot fungus).